Reading from the N-terminus, the 425-residue chain is Polyribonucleotide 5'-hydroxyl-kinase Clp1 (425 aa).

ATP is bound by residues Glu22, Lys62, and 124 to 129; that span reads DVGKST.

Belongs to the Clp1 family. Clp1 subfamily. Component of the tRNA splicing endonuclease complex, composed of CLP1, TSEN2, TSEN15, TSEN34 and TSEN54. Component of pre-mRNA cleavage complex II (CF-II). Also associates with numerous components of the pre-mRNA cleavage complex I (CF-I/CFIm), including NUDT21, CPSF2, CPSF3, CPSF6 and CPSF7. Interacts with CSTF2 and SYMPK. Mg(2+) serves as cofactor. It depends on Mn(2+) as a cofactor. Ni(2+) is required as a cofactor.

Its subcellular location is the nucleus. It catalyses the reaction a 5'-end dephospho-2'-deoxyribonucleoside-DNA + ATP = a 5'-end 5'-phospho-2'-deoxyribonucleoside-DNA + ADP + H(+). It carries out the reaction a 5'-end dephospho-ribonucleoside-RNA + ATP = a 5'-end 5'-phospho-ribonucleoside-RNA + ADP + H(+). Functionally, polynucleotide kinase that can phosphorylate the 5'-hydroxyl groups of double-stranded RNA (dsRNA), single-stranded RNA (ssRNA), double-stranded DNA (dsDNA) and double-stranded DNA:RNA hybrids. dsRNA is phosphorylated more efficiently than dsDNA, and the RNA component of a DNA:RNA hybrid is phosphorylated more efficiently than the DNA component. Plays a key role in both tRNA splicing and mRNA 3'-end formation. Component of the tRNA splicing endonuclease complex: phosphorylates the 5'-terminus of the tRNA 3'-exon during tRNA splicing; this phosphorylation event is a prerequisite for the subsequent ligation of the two exon halves and the production of a mature tRNA. Its role in tRNA splicing and maturation is required for cerebellar development. Component of the pre-mRNA cleavage complex II (CF-II), which seems to be required for mRNA 3'-end formation. Also phosphorylates the 5'-terminus of exogenously introduced short interfering RNAs (siRNAs), which is a necessary prerequisite for their incorporation into the RNA-induced silencing complex (RISC). However, endogenous siRNAs and microRNAs (miRNAs) that are produced by the cleavage of dsRNA precursors by DICER1 already contain a 5'-phosphate group, so this protein may be dispensible for normal RNA-mediated gene silencing. The polypeptide is Polyribonucleotide 5'-hydroxyl-kinase Clp1 (Bos taurus (Bovine)).